The following is a 400-amino-acid chain: Exodeoxyribonuclease 7 large subunit (400 aa).

Belongs to the XseA family. As to quaternary structure, heterooligomer composed of large and small subunits.

It is found in the cytoplasm. The enzyme catalyses Exonucleolytic cleavage in either 5'- to 3'- or 3'- to 5'-direction to yield nucleoside 5'-phosphates.. Bidirectionally degrades single-stranded DNA into large acid-insoluble oligonucleotides, which are then degraded further into small acid-soluble oligonucleotides. This is Exodeoxyribonuclease 7 large subunit from Clostridium novyi (strain NT).